A 454-amino-acid chain; its full sequence is UDP-N-acetylmuramate--L-alanine ligase (454 aa).

ATP is bound at residue 112 to 118; that stretch reads GTHGKTT.

The protein belongs to the MurCDEF family.

The protein resides in the cytoplasm. The enzyme catalyses UDP-N-acetyl-alpha-D-muramate + L-alanine + ATP = UDP-N-acetyl-alpha-D-muramoyl-L-alanine + ADP + phosphate + H(+). It functions in the pathway cell wall biogenesis; peptidoglycan biosynthesis. In terms of biological role, cell wall formation. The polypeptide is UDP-N-acetylmuramate--L-alanine ligase (Oleidesulfovibrio alaskensis (strain ATCC BAA-1058 / DSM 17464 / G20) (Desulfovibrio alaskensis)).